The sequence spans 79 residues: D-alanyl carrier protein (79 aa).

One can recognise a Carrier domain in the interval 1 to 76; sequence MKEQIFDIIE…KIAARVQEKT (76 aa). At Ser-34 the chain carries O-(pantetheine 4'-phosphoryl)serine.

Belongs to the DltC family. Post-translationally, 4'-phosphopantetheine is transferred from CoA to a specific serine of apo-DCP.

It localises to the cytoplasm. The protein operates within cell wall biogenesis; lipoteichoic acid biosynthesis. Carrier protein involved in the D-alanylation of lipoteichoic acid (LTA). The loading of thioester-linked D-alanine onto DltC is catalyzed by D-alanine--D-alanyl carrier protein ligase DltA. The DltC-carried D-alanyl group is further transferred to cell membrane phosphatidylglycerol (PG) by forming an ester bond, probably catalyzed by DltD. D-alanylation of LTA plays an important role in modulating the properties of the cell wall in Gram-positive bacteria, influencing the net charge of the cell wall. In Lactococcus lactis subsp. cremoris (strain SK11), this protein is D-alanyl carrier protein.